Consider the following 418-residue polypeptide: UDP-N-acetylglucosamine 1-carboxyvinyltransferase (418 aa).

A phosphoenolpyruvate-binding site is contributed by 23-24; it reads KN. Arg93 lines the UDP-N-acetyl-alpha-D-glucosamine pocket. Residue Asp117 is the Proton donor of the active site. Asp305 and Val327 together coordinate UDP-N-acetyl-alpha-D-glucosamine.

Belongs to the EPSP synthase family. MurA subfamily.

Its subcellular location is the cytoplasm. It catalyses the reaction phosphoenolpyruvate + UDP-N-acetyl-alpha-D-glucosamine = UDP-N-acetyl-3-O-(1-carboxyvinyl)-alpha-D-glucosamine + phosphate. It functions in the pathway cell wall biogenesis; peptidoglycan biosynthesis. In terms of biological role, cell wall formation. Adds enolpyruvyl to UDP-N-acetylglucosamine. This chain is UDP-N-acetylglucosamine 1-carboxyvinyltransferase, found in Mycobacterium bovis (strain ATCC BAA-935 / AF2122/97).